Consider the following 1055-residue polypeptide: Sodium/potassium exporting P-type ATPase 1 (1055 aa).

Over 1–73 the chain is Cytoplasmic; the sequence is MTPSIGYVDE…GADEKISISK (73 aa). The chain crosses the membrane as a helical span at residues 74-94; it reads ILAHQIFNAMVLVLIISLIIA. Over 95–99 the chain is Extracellular; the sequence is LAIKD. A helical transmembrane segment spans residues 100 to 120; the sequence is WISGGVIGFVVFINIFVGFIQ. At 121–298 the chain is on the cytoplasmic side; it reads ELKAEKTMGS…TNVGTPLQRK (178 aa). The chain crosses the membrane as a helical span at residues 299–319; sequence LSWLAILLFWVAVLFAIVVMA. The Extracellular portion of the chain corresponds to 320–328; that stretch reads SQEMRVNRN. A helical transmembrane segment spans residues 329–349; sequence VAIYAICVALSMIPSSLVVVL. At 350 to 789 the chain is on the cytoplasmic side; that stretch reads TITMAIGAQV…RMSSNIQKFV (440 aa). Catalysis depends on Asp385, which acts as the 4-aspartylphosphate intermediate. The Mg(2+) site is built by Asp385 and Thr387. The ATP site is built by Thr387, Glu491, Lys544, Arg586, Thr646, Gly647, Asp648, Arg705, and Lys711. Asp730 is a Mg(2+) binding site. Asn733 is a binding site for ATP. A helical membrane pass occupies residues 790 to 810; it reads LQLLAENVAQALYLMIGLAFI. At 811–816 the chain is on the extracellular side; it reads DKSGYS. The helical transmembrane segment at 817–837 threads the bilayer; that stretch reads VFPLSPVEVLWIIVVTSCFPA. Residues 838-866 are Cytoplasmic-facing; it reads MGLGQEKASHDILEQPPNATIFTWEVIID. A helical membrane pass occupies residues 867 to 887; it reads MIAYGFWMAVCCLVCFVCIVY. At 888 to 913 the chain is on the extracellular side; it reads GKGDGSLGENCNEGSDTGCNLVFRGR. A helical transmembrane segment spans residues 914 to 934; it reads SGAFAAFTWCALLLAWECIHL. The Cytoplasmic portion of the chain corresponds to 935–962; it reads RLSFFKMRPELENPWWKQLAIDLWDNQF. Residues 963-983 traverse the membrane as a helical segment; it reads LFWSVMGAIVSVFPVVYIPVI. Topologically, residues 984–990 are extracellular; sequence NNKVFLH. Residues 991-1011 traverse the membrane as a helical segment; the sequence is APIGYEWGLAVAFTILFLIGA. Residues 1012-1055 are Cytoplasmic-facing; the sequence is EGWKWFKRVYYRKSNANNPEYDLERNDPFKEYSSFSKSNTMEIV.

It belongs to the cation transport ATPase (P-type) (TC 3.A.3) family. Type IID subfamily. Requires Mg(2+) as cofactor. In terms of processing, the active site is phosphorylated in presence of sodium or potassium and in conditions of higher pH. Not phosphorylated in presence of calcium ions.

Its subcellular location is the cell membrane. It catalyses the reaction Na(+)(in) + ATP + H2O = Na(+)(out) + ADP + phosphate + H(+). The catalysed reaction is K(+)(in) + ATP + H2O = K(+)(out) + ADP + phosphate + H(+). Functionally, catalyzes the hydrolysis of ATP coupled with the export of sodium and potassium from the cell. May be an inefficient potassium exporter. May transport other cations such as lithium. Sodium/potassium efflux ATPases are involved in salt tolerance and maintaining the membrane potential across the plasma membrane in high salinity (Na+) or alkaline (K+) environments. This Schwanniomyces occidentalis (Yeast) protein is Sodium/potassium exporting P-type ATPase 1.